The following is an 83-amino-acid chain: Protein FAM240A (83 aa).

The protein belongs to the FAM240 family.

This chain is Protein FAM240A, found in Homo sapiens (Human).